A 488-amino-acid chain; its full sequence is Transmembrane protein 39A (488 aa).

Residues Asn-31 and Asn-39 are each glycosylated (N-linked (GlcNAc...) asparagine). 8 consecutive transmembrane segments (helical) span residues 72 to 92 (SLLF…IQYI), 110 to 130 (TSLN…VMLA), 154 to 174 (VLIS…CWTL), 182 to 202 (SVLN…LCCF), 287 to 307 (EVLF…LCFV), 319 to 339 (CEHL…QLLP), 420 to 440 (LLNL…YSLL), and 446 to 466 (NHTL…FKLL).

It belongs to the TMEM39 family. In terms of assembly, interacts with SACM1L, SEC23A and SEC24A. As to quaternary structure, (Microbial infection) Interacts with encephalomyocarditis virus (EMCV) major capsid proteins VP1 and VP2. In terms of tissue distribution, up-regulated in brain tumor glioblastoma multiforme cells (at protein level).

Its subcellular location is the endoplasmic reticulum membrane. Regulates autophagy by controlling the spatial distribution and levels of the intracellular phosphatidylinositol 4-phosphate (PtdIns(4)P) pools. Modulates (PtdIns(4)P) levels by regulating the ER-to-Golgi trafficking of the phosphatidylinositide phosphatase SACM1L. In terms of biological role, (Microbial infection) Positively regulates the replication of encephalomyocarditis virus (EMCV) via autophagy-dependent pathway. In Homo sapiens (Human), this protein is Transmembrane protein 39A (TMEM39A).